Reading from the N-terminus, the 75-residue chain is Conotoxin Im23.5 (75 aa).

The first 23 residues, 1–23 (MKFFTCLLLLLVVLTVVFDNVDA), serve as a signal peptide directing secretion. 3 cysteine pairs are disulfide-bonded: C24–C28, C37–C40, and C41–C43. Residues 24–50 (CDRSCTGVMGHPSCATCCACFTSAGKR) constitute a propeptide that is removed on maturation.

In terms of tissue distribution, expressed by the venom duct.

It localises to the secreted. Functionally, probable neurotoxin. This Conus imperialis (Imperial cone) protein is Conotoxin Im23.5.